A 671-amino-acid polypeptide reads, in one-letter code: tRNA 5-methylaminomethyl-2-thiouridine biosynthesis bifunctional protein MnmC (671 aa).

The tRNA (mnm(5)s(2)U34)-methyltransferase stretch occupies residues 1 to 245 (MVNVMNTLSF…KREMLWGEKP (245 aa)). Positions 272–671 (VGGGVASLFV…RKLLKGSKVE (400 aa)) are FAD-dependent cmnm(5)s(2)U34 oxidoreductase.

It in the N-terminal section; belongs to the methyltransferase superfamily. tRNA (mnm(5)s(2)U34)-methyltransferase family. In the C-terminal section; belongs to the DAO family. FAD serves as cofactor.

The protein resides in the cytoplasm. It catalyses the reaction 5-aminomethyl-2-thiouridine(34) in tRNA + S-adenosyl-L-methionine = 5-methylaminomethyl-2-thiouridine(34) in tRNA + S-adenosyl-L-homocysteine + H(+). Its function is as follows. Catalyzes the last two steps in the biosynthesis of 5-methylaminomethyl-2-thiouridine (mnm(5)s(2)U) at the wobble position (U34) in tRNA. Catalyzes the FAD-dependent demodification of cmnm(5)s(2)U34 to nm(5)s(2)U34, followed by the transfer of a methyl group from S-adenosyl-L-methionine to nm(5)s(2)U34, to form mnm(5)s(2)U34. The protein is tRNA 5-methylaminomethyl-2-thiouridine biosynthesis bifunctional protein MnmC of Actinobacillus pleuropneumoniae serotype 5b (strain L20).